The chain runs to 229 residues: Protein-L-isoaspartate O-methyltransferase (229 aa).

Serine 74 is an active-site residue.

The protein belongs to the methyltransferase superfamily. L-isoaspartyl/D-aspartyl protein methyltransferase family.

It is found in the cytoplasm. It catalyses the reaction [protein]-L-isoaspartate + S-adenosyl-L-methionine = [protein]-L-isoaspartate alpha-methyl ester + S-adenosyl-L-homocysteine. In terms of biological role, catalyzes the methyl esterification of L-isoaspartyl residues in peptides and proteins that result from spontaneous decomposition of normal L-aspartyl and L-asparaginyl residues. It plays a role in the repair and/or degradation of damaged proteins. The sequence is that of Protein-L-isoaspartate O-methyltransferase from Pelotomaculum thermopropionicum (strain DSM 13744 / JCM 10971 / SI).